The primary structure comprises 165 residues: Anaphase-promoting complex subunit 11 (165 aa).

Residues 52 to 95 form an RING-type; atypical zinc finger; the sequence is CPSCKFPGDQCPLVIGLCHHNFHDHCIYRWLDTPTSKGLCPMCR.

As to quaternary structure, the APC/C is composed of at least 13 subunits that stay tightly associated throughout the cell cycle: APC1, APC2, APC4, APC5, APC9, APC11, CDC16, CDC23, CDC26, CDC27, DOC1, MND2 and SWM1.

It functions in the pathway protein modification; protein ubiquitination. Its function is as follows. Probably catalytic subunit of the anaphase promoting complex/cyclosome (APC/C), a cell cycle-regulated E3 ubiquitin-protein ligase complex that controls progression through mitosis and the G1 phase of the cell cycle. The APC/C is thought to confer substrate specificity and, in the presence of ubiquitin-conjugating E2 enzymes, it catalyzes the formation of protein-ubiquitin conjugates that are subsequently degraded by the 26S proteasome. In early mitosis, the APC/C is activated by CDC20 and targets securin PDS1, the B-type cyclin CLB5, and other anaphase inhibitory proteins for proteolysis, thereby triggering the separation of sister chromatids at the metaphase-to-anaphase transition. In late mitosis and in G1, degradation of CLB5 allows activation of the APC/C by CDH1, which is needed to destroy CDC20 and the B-type cyclin CLB2 to allow exit from mitosis and creating the low CDK state necessary for cytokinesis and for reforming prereplicative complexes in G1 prior to another round of replication. APC11 is required to recruit the ubiquitin-conjugating enzyme E2 to the APC/C. This is Anaphase-promoting complex subunit 11 (APC11) from Saccharomyces cerevisiae (strain ATCC 204508 / S288c) (Baker's yeast).